The following is a 679-amino-acid chain: Retrovirus-related Env polyprotein from Fv-4 locus (679 aa).

The interval 268–321 (IGPNPVLSDQRPPSRPVPARPPPPSNSTPTGDPLTPPTGDPLTPTKPPQAGTGD) is disordered. 2 stretches are compositionally biased toward pro residues: residues 280–293 (PSRP…PPSN) and 301–314 (LTPP…PTKP).

This chain is Retrovirus-related Env polyprotein from Fv-4 locus (Fv4), found in Mus musculus (Mouse).